Consider the following 629-residue polypeptide: tRNA uridine 5-carboxymethylaminomethyl modification enzyme MnmG (629 aa).

Residue 14 to 19 (GAGHAG) coordinates FAD. 274–288 (GPRYCPSIEDKVVRF) is a binding site for NAD(+).

It belongs to the MnmG family. As to quaternary structure, homodimer. Heterotetramer of two MnmE and two MnmG subunits. Requires FAD as cofactor.

It is found in the cytoplasm. Its function is as follows. NAD-binding protein involved in the addition of a carboxymethylaminomethyl (cmnm) group at the wobble position (U34) of certain tRNAs, forming tRNA-cmnm(5)s(2)U34. In Xylella fastidiosa (strain 9a5c), this protein is tRNA uridine 5-carboxymethylaminomethyl modification enzyme MnmG.